A 213-amino-acid polypeptide reads, in one-letter code: 3-isopropylmalate dehydratase small subunit (213 aa).

This sequence belongs to the LeuD family. LeuD type 1 subfamily. As to quaternary structure, heterodimer of LeuC and LeuD.

The catalysed reaction is (2R,3S)-3-isopropylmalate = (2S)-2-isopropylmalate. The protein operates within amino-acid biosynthesis; L-leucine biosynthesis; L-leucine from 3-methyl-2-oxobutanoate: step 2/4. Catalyzes the isomerization between 2-isopropylmalate and 3-isopropylmalate, via the formation of 2-isopropylmaleate. In Neisseria meningitidis serogroup C (strain 053442), this protein is 3-isopropylmalate dehydratase small subunit.